We begin with the raw amino-acid sequence, 207 residues long: Serotonin N-acetyltransferase (207 aa).

The tract at residues 1 to 29 (MSTPSVHCLKPSPLHLPSGIPGSPGRQRR) is disordered. The tract at residues 28-35 (RRHTLPAN) is YWHAZ-binding. A Phosphothreonine; by PKA modification is found at Thr-31. The 162-residue stretch at 35–196 (NEFRCLTPED…TFTEMHCSLR (162 aa)) folds into the N-acetyltransferase domain. Leu-124 is a binding site for substrate. Residues 124 to 126 (LAV) and 132 to 137 (QQGKGS) each bind acetyl-CoA. Met-159 contributes to the substrate binding site. 168-170 (YQR) is a binding site for acetyl-CoA. Phosphoserine; by PKA is present on Ser-205.

This sequence belongs to the acetyltransferase family. AANAT subfamily. In terms of assembly, monomer. Interacts with several 14-3-3 proteins, including YWHAB, YWHAE, YWHAG and YWHAZ, preferentially when phosphorylated at Thr-31. Phosphorylation on Ser-205 also allows binding to YWHAZ, but with a 10-fold lower affinity. The interaction with YWHAZ considerably increases affinity for arylalkylamines and acetyl-CoA and protects the enzyme from dephosphorylation and proteasomal degradation. It may also prevent thiol-dependent inactivation. The physiological stoichiometry of the interaction is not clear. In vitro studies show either 1:2 (i.e. 1 AANAT molecule per YWHAZ dimer) or 2:2. CAMP-dependent phosphorylation on both N-terminal Thr-31 and C-terminal Ser-205 regulates AANAT activity by promoting interaction with 14-3-3 proteins. As to expression, highest expression in the pineal gland, followed by retina. Expressed at much lower levels in brainstem and pituitary gland. AANAT activity also detected at low levels in the olfactory lobe.

It localises to the cytoplasm. The catalysed reaction is a 2-arylethylamine + acetyl-CoA = an N-acetyl-2-arylethylamine + CoA + H(+). It participates in aromatic compound metabolism; melatonin biosynthesis; melatonin from serotonin: step 1/2. Functionally, controls the night/day rhythm of melatonin production in the pineal gland. Catalyzes the N-acetylation of serotonin into N-acetylserotonin, the penultimate step in the synthesis of melatonin. The protein is Serotonin N-acetyltransferase (AANAT) of Ovis aries (Sheep).